Here is a 1089-residue protein sequence, read N- to C-terminus: Platelet-derived growth factor receptor alpha (1089 aa).

Residues 1 to 24 (MGTSHQVFLVLSCLLTGPGLISCQ) form the signal peptide. 5 consecutive Ig-like C2-type domains span residues 25-113 (LLLP…SEIE), 117-201 (IYIY…FKTS), 202-306 (EFNV…KRVT), 319-410 (PTFG…FELS), and 414-517 (PASI…LKLV). Residues 25–528 (LLLPSILPNE…PTLRSELTVA (504 aa)) lie on the Extracellular side of the membrane. N-linked (GlcNAc...) asparagine glycosylation is found at Asn42, Asn76, Asn89, Asn103, and Asn179. Residues Cys49 and Cys100 are joined by a disulfide bond. Disulfide bonds link Cys150–Cys189 and Cys235–Cys290. 5 N-linked (GlcNAc...) asparagine glycosylation sites follow: Asn353, Asn359, Asn458, Asn468, and Asn506. Cys435 and Cys501 form a disulfide bridge. A helical membrane pass occupies residues 529 to 549 (AAVLVLLVIVIVSLIVLVVIW). Topologically, residues 550-1089 (KQKPRYEIRW…SSDLVEDSFL (540 aa)) are cytoplasmic. Residues Tyr572 and Tyr574 each carry the phosphotyrosine; by autocatalysis modification. The Protein kinase domain maps to 593–954 (LVLGRILGSG…HLSEIVENLL (362 aa)). Residues 599 to 607 (LGSGAFGKV) and Lys627 each bind ATP. Tyr720, Tyr731, Tyr742, Tyr754, Tyr762, and Tyr768 each carry phosphotyrosine; by autocatalysis. The active-site Proton acceptor is Asp818. Residues Tyr849, Tyr988, and Tyr1018 each carry the phosphotyrosine; by autocatalysis modification. Residues 1018-1089 (YIIPLPDIDP…SSDLVEDSFL (72 aa)) form a disordered region. Polar residues predominate over residues 1041-1059 (SSQTSEESAIETGSSSSTF). Over residues 1065 to 1089 (ETIEDIDMMDDIGIDSSDLVEDSFL) the composition is skewed to acidic residues.

This sequence belongs to the protein kinase superfamily. Tyr protein kinase family. CSF-1/PDGF receptor subfamily. In terms of assembly, interacts with homodimeric PDGFA, PDGFB and PDGFC, and with heterodimers formed by PDGFA and PDGFB. Monomer in the absence of bound ligand. Interaction with dimeric PDGFA, PDGFB and/or PDGFC leads to receptor dimerization, where both PDGFRA homodimers and heterodimers with PDGFRB are observed. Interacts (tyrosine phosphorylated) with SHB (via SH2 domain). Interacts (tyrosine phosphorylated) with SHF (via SH2 domain). Interacts (tyrosine phosphorylated) with SRC (via SH2 domain). Interacts (tyrosine phosphorylated) with PIK3R1. Interacts (tyrosine phosphorylated) with PLCG1 (via SH2 domain). Interacts (tyrosine phosphorylated) with CRK, GRB2 and GRB7. Interacts with CD248; this interaction promotes PDGF receptor signaling pathway. Ubiquitinated, leading to its internalization and degradation. In terms of processing, autophosphorylated on tyrosine residues upon ligand binding. Autophosphorylation occurs in trans, i.e. one subunit of the dimeric receptor phosphorylates tyrosine residues on the other subunit. Phosphorylation at Tyr-731 and Tyr-742 is important for interaction with PIK3R1. Phosphorylation at Tyr-720 and Tyr-754 is important for interaction with PTPN11. Phosphorylation at Tyr-762 is important for interaction with CRK. Phosphorylation at Tyr-572 and Tyr-574 is important for interaction with SRC and SRC family members. Phosphorylation at Tyr-988 and Tyr-1018 is important for interaction with PLCG1. In terms of tissue distribution, focally expressed in cortical interstitial cells and highly expressed in the interstitium of the papillary region. Also expressed by adventitial cells in arterial vessels. Up-regulated in areas of renal fibrosis. In mice with unilateral ureteral obstruction, expression in cortical interstitial cells becomes prominent at day 4 which increases progressively until day 14.

It localises to the cell membrane. The protein resides in the cell projection. Its subcellular location is the cilium. It is found in the golgi apparatus. It carries out the reaction L-tyrosyl-[protein] + ATP = O-phospho-L-tyrosyl-[protein] + ADP + H(+). Present in an inactive conformation in the absence of bound ligand. Binding of PDGFA and/or PDGFB leads to dimerization and activation by autophosphorylation on tyrosine residues. Inhibited by imatinib, nilotinib and sorafenib. Its function is as follows. Tyrosine-protein kinase that acts as a cell-surface receptor for PDGFA, PDGFB and PDGFC and plays an essential role in the regulation of embryonic development, cell proliferation, survival and chemotaxis. Depending on the context, promotes or inhibits cell proliferation and cell migration. Plays an important role in the differentiation of bone marrow-derived mesenchymal stem cells. Required for normal skeleton development and cephalic closure during embryonic development. Required for normal development of the mucosa lining the gastrointestinal tract, and for recruitment of mesenchymal cells and normal development of intestinal villi. Plays a role in cell migration and chemotaxis in wound healing. Plays a role in platelet activation, secretion of agonists from platelet granules, and in thrombin-induced platelet aggregation. Binding of its cognate ligands - homodimeric PDGFA, homodimeric PDGFB, heterodimers formed by PDGFA and PDGFB or homodimeric PDGFC -leads to the activation of several signaling cascades; the response depends on the nature of the bound ligand and is modulated by the formation of heterodimers between PDGFRA and PDGFRB. Phosphorylates PIK3R1, PLCG1, and PTPN11. Activation of PLCG1 leads to the production of the cellular signaling molecules diacylglycerol and inositol 1,4,5-trisphosphate, mobilization of cytosolic Ca(2+) and the activation of protein kinase C. Phosphorylates PIK3R1, the regulatory subunit of phosphatidylinositol 3-kinase, and thereby mediates activation of the AKT1 signaling pathway. Mediates activation of HRAS and of the MAP kinases MAPK1/ERK2 and/or MAPK3/ERK1. Promotes activation of STAT family members STAT1, STAT3 and STAT5A and/or STAT5B. Receptor signaling is down-regulated by protein phosphatases that dephosphorylate the receptor and its down-stream effectors, and by rapid internalization of the activated receptor. The sequence is that of Platelet-derived growth factor receptor alpha (Pdgfra) from Mus musculus (Mouse).